The primary structure comprises 374 residues: MKIRLHTLLAVLTAAPLLLAAAGCGSKPPSGSPETGAGAGTVATTPASSPVTLAETGSTLLYPLFNLWGPAFHERYPNVTITAQGTGSGAGIAQAAAGTVNIGASDAYLSEGDMAAHKGLMNIALAISAQQVNYNLPGVSEHLKLNGKVLAAMYQGTIKTWDDPQIAALNPGVNLPGTAVVPLHRSDGSGDTFLFTQYLSKQDPEGWGKSPGFGTTVDFPAVPGALGENGNGGMVTGCAETPGCVAYIGISFLDQASQRGLGEAQLGNSSGNFLLPDAQSIQAAAAGFASKTPANQAISMIDGPAPDGYPIINYEYAIVNNRQKDAATAQTLQAFLHWAITDGNKASFLDQAHFQPLPPAVVKLSDALIATISS.

An N-terminal signal peptide occupies residues 1–23 (MKIRLHTLLAVLTAAPLLLAAAG). C24 carries the N-palmitoyl cysteine lipid modification. C24 is lipidated: S-diacylglycerol cysteine. The tract at residues 25 to 48 (GSKPPSGSPETGAGAGTVATTPAS) is disordered. Residues 58–60 (STL), S88, D106, and 189–191 (SGD) contribute to the phosphate site.

This sequence belongs to the PstS family. As to quaternary structure, the complex is composed of two ATP-binding proteins (PstB), two transmembrane proteins (PstC and PstA) and a solute-binding protein (PstS).

The protein localises to the cell membrane. Its subcellular location is the secreted. Functions in inorganic phosphate uptake, a phosphate-binding protein, although probably not the main uptake protein under phosphate starvation. Part of the ABC transporter complex PstSACB involved in phosphate import. Functionally, a host TLR2 agonist (toll-like receptor), requires both host TLR1 and TLR2 as coreceptors. The protein is Phosphate-binding protein PstS1 (pstS1) of Mycobacterium bovis (strain BCG / Pasteur 1173P2).